The sequence spans 266 residues: 4-hydroxy-tetrahydrodipicolinate reductase (266 aa).

NAD(+)-binding positions include 7–12 (GTIGRM), Glu33, 96–98 (GTT), and 120–123 (APNM). The active-site Proton donor/acceptor is the His153. A (S)-2,3,4,5-tetrahydrodipicolinate-binding site is contributed by His154. The active-site Proton donor is Lys157. 163–164 (GT) provides a ligand contact to (S)-2,3,4,5-tetrahydrodipicolinate.

Belongs to the DapB family.

Its subcellular location is the cytoplasm. It carries out the reaction (S)-2,3,4,5-tetrahydrodipicolinate + NAD(+) + H2O = (2S,4S)-4-hydroxy-2,3,4,5-tetrahydrodipicolinate + NADH + H(+). The enzyme catalyses (S)-2,3,4,5-tetrahydrodipicolinate + NADP(+) + H2O = (2S,4S)-4-hydroxy-2,3,4,5-tetrahydrodipicolinate + NADPH + H(+). The protein operates within amino-acid biosynthesis; L-lysine biosynthesis via DAP pathway; (S)-tetrahydrodipicolinate from L-aspartate: step 4/4. Functionally, catalyzes the conversion of 4-hydroxy-tetrahydrodipicolinate (HTPA) to tetrahydrodipicolinate. This is 4-hydroxy-tetrahydrodipicolinate reductase from Polynucleobacter necessarius subsp. necessarius (strain STIR1).